The sequence spans 647 residues: Acetyl-coenzyme A synthetase (647 aa).

CoA is bound by residues arginine 190–arginine 193 and threonine 310. ATP contacts are provided by residues glycine 386–proline 388, aspartate 410–threonine 415, aspartate 499, and arginine 514. Serine 522 lines the CoA pocket. An ATP-binding site is contributed by arginine 525. Residues valine 536, histidine 538, and valine 541 each coordinate Mg(2+). Arginine 583 is a binding site for CoA. Lysine 608 carries the N6-acetyllysine modification.

Belongs to the ATP-dependent AMP-binding enzyme family. It depends on Mg(2+) as a cofactor. In terms of processing, acetylated. Deacetylation by the SIR2-homolog deacetylase activates the enzyme.

It catalyses the reaction acetate + ATP + CoA = acetyl-CoA + AMP + diphosphate. Functionally, catalyzes the conversion of acetate into acetyl-CoA (AcCoA), an essential intermediate at the junction of anabolic and catabolic pathways. AcsA undergoes a two-step reaction. In the first half reaction, AcsA combines acetate with ATP to form acetyl-adenylate (AcAMP) intermediate. In the second half reaction, it can then transfer the acetyl group from AcAMP to the sulfhydryl group of CoA, forming the product AcCoA. This chain is Acetyl-coenzyme A synthetase, found in Xylella fastidiosa (strain 9a5c).